Consider the following 422-residue polypeptide: 3-phosphoshikimate 1-carboxyvinyltransferase (422 aa).

The 3-phosphoshikimate site is built by Lys21, Ser22, and Arg26. Lys21 provides a ligand contact to phosphoenolpyruvate. Phosphoenolpyruvate is bound by residues Gly93 and Arg121. Residues Ser166, Ser167, Gln168, Ser194, Asp310, and Lys337 each coordinate 3-phosphoshikimate. A phosphoenolpyruvate-binding site is contributed by Gln168. Asp310 (proton acceptor) is an active-site residue. Phosphoenolpyruvate contacts are provided by Arg341, Arg382, and Lys407.

This sequence belongs to the EPSP synthase family. As to quaternary structure, monomer.

It localises to the cytoplasm. The enzyme catalyses 3-phosphoshikimate + phosphoenolpyruvate = 5-O-(1-carboxyvinyl)-3-phosphoshikimate + phosphate. Its pathway is metabolic intermediate biosynthesis; chorismate biosynthesis. Its function is as follows. Catalyzes the transfer of the enolpyruvyl moiety of phosphoenolpyruvate (PEP) to the 5-hydroxyl of shikimate-3-phosphate (S3P) to produce enolpyruvyl shikimate-3-phosphate and inorganic phosphate. The chain is 3-phosphoshikimate 1-carboxyvinyltransferase from Methanoculleus marisnigri (strain ATCC 35101 / DSM 1498 / JR1).